The primary structure comprises 248 residues: Pulmonary surfactant-associated protein A (248 aa).

The N-terminal stretch at methionine 1 to cysteine 20 is a signal peptide. Residue asparagine 21 is glycosylated (N-linked (GlcNAc...) asparagine). The 73-residue stretch at glycine 28–proline 100 folds into the Collagen-like domain. The disordered stretch occupies residues glycine 28–proline 100. A 4-hydroxyproline mark is found at proline 30, proline 33, proline 36, proline 42, proline 54, proline 57, proline 63, proline 67, proline 70, and proline 76. Positions proline 42–lysine 51 are enriched in basic and acidic residues. Pro residues predominate over residues proline 54–glycine 65. The segment covering leucine 69 to proline 82 has biased composition (low complexity). Residues glutamate 84–glutamate 93 show a composition bias toward basic and acidic residues. Residues leucine 132–phenylalanine 248 enclose the C-type lectin domain. Intrachain disulfides connect cysteine 155-cysteine 246 and cysteine 224-cysteine 238. Asparagine 207 carries an N-linked (GlcNAc...) asparagine glycan. Residues glutamate 215, arginine 217, asparagine 234, and aspartate 235 each contribute to the Ca(2+) site.

It belongs to the SFTPA family. In terms of assembly, oligomeric complex of 6 set of homotrimers.

Its subcellular location is the secreted. It localises to the extracellular space. It is found in the extracellular matrix. The protein localises to the surface film. In presence of calcium ions, it binds to surfactant phospholipids and contributes to lower the surface tension at the air-liquid interface in the alveoli of the mammalian lung and is essential for normal respiration. Enhances the expression of MYO18A/SP-R210 on alveolar macrophages. This chain is Pulmonary surfactant-associated protein A (Sftpa1), found in Mus musculus (Mouse).